The following is a 235-amino-acid chain: Orotidine 5'-phosphate decarboxylase (235 aa).

Substrate contacts are provided by residues D17, K39, 66 to 75 (DMKLLDIDHT), T121, R182, Q191, and R212. K68 acts as the Proton donor in catalysis.

It belongs to the OMP decarboxylase family. Type 1 subfamily. As to quaternary structure, homodimer.

It carries out the reaction orotidine 5'-phosphate + H(+) = UMP + CO2. It functions in the pathway pyrimidine metabolism; UMP biosynthesis via de novo pathway; UMP from orotate: step 2/2. Its function is as follows. Catalyzes the decarboxylation of orotidine 5'-monophosphate (OMP) to uridine 5'-monophosphate (UMP). The chain is Orotidine 5'-phosphate decarboxylase from Bartonella bacilliformis.